The chain runs to 193 residues: Acyl carrier protein phosphodiesterase (193 aa).

The protein belongs to the AcpH family.

The catalysed reaction is holo-[ACP] + H2O = apo-[ACP] + (R)-4'-phosphopantetheine + H(+). Functionally, converts holo-ACP to apo-ACP by hydrolytic cleavage of the phosphopantetheine prosthetic group from ACP. The sequence is that of Acyl carrier protein phosphodiesterase from Pectobacterium atrosepticum (strain SCRI 1043 / ATCC BAA-672) (Erwinia carotovora subsp. atroseptica).